We begin with the raw amino-acid sequence, 173 residues long: Alpha-crystallin A chain (173 aa).

An N-acetylmethionine modification is found at M1. The tract at residues M1–E63 is required for complex formation with BFSP1 and BFSP2. A Deamidated glutamine; partial modification is found at Q6. S45 carries the phosphoserine modification. Q50 carries the post-translational modification Deamidated glutamine; partial. Residues L52–S162 enclose the sHSP domain. The residue at position 70 (K70) is an N6-acetyllysine. Position 90 is a deamidated glutamine; partial (Q90). At K99 the chain carries N6-acetyllysine. H100 is a binding site for Zn(2+). N101 is subject to Deamidated asparagine; partial. Zn(2+)-binding residues include E102 and H107. S122 carries the phosphoserine modification. Position 123 is a deamidated asparagine; partial (N123). The interval P144 to S173 is disordered. Residues G153–P167 are compositionally biased toward basic and acidic residues. H154 contributes to the Zn(2+) binding site. S162 carries O-linked (GlcNAc) serine glycosylation.

The protein belongs to the small heat shock protein (HSP20) family. In terms of assembly, heteromer composed of three CRYAA and one CRYAB subunits. Inter-subunit bridging via zinc ions enhances stability, which is crucial as there is no protein turn over in the lens. Can also form homodimers and homotetramers (dimers of dimers) which serve as the building blocks of homooligomers. Within homooligomers, the zinc-binding motif is created from residues of 3 different molecules. His-100 and Glu-102 from one molecule are ligands of the zinc ion, and His-107 and His-154 residues from additional molecules complete the site with tetrahedral coordination geometry. Part of a complex required for lens intermediate filament formation composed of BFSP1, BFSP2 and CRYAA. Post-translationally, acetylation at Lys-70 may increase chaperone activity. Undergoes age-dependent proteolytical cleavage at the C-terminus.

It localises to the cytoplasm. It is found in the nucleus. Its function is as follows. Contributes to the transparency and refractive index of the lens. Acts as a chaperone, preventing aggregation of various proteins under a wide range of stress conditions. Required for the correct formation of lens intermediate filaments as part of a complex composed of BFSP1, BFSP2 and CRYAA. The chain is Alpha-crystallin A chain (CRYAA) from Equus caballus (Horse).